Reading from the N-terminus, the 255-residue chain is Kallikrein-15 (255 aa).

Residues 1–15 (MWLLLPLSFLLTSTA) form the signal peptide. The propeptide at 16–20 (QDGGK) is activation peptide. The tract at residues 21–253 (LLEGEECAPH…YVKWIRETMK (233 aa)) is serine protease. The cysteines at positions 46 and 62 are disulfide-linked. Catalysis depends on charge relay system residues His61 and Asp105. 3 cysteine pairs are disulfide-bonded: Cys137-Cys214, Cys179-Cys193, and Cys204-Cys229. Asn170 carries N-linked (GlcNAc...) asparagine glycosylation. Ser208 serves as the catalytic Charge relay system. Asn231 carries N-linked (GlcNAc...) asparagine glycosylation.

It belongs to the peptidase S1 family. Kallikrein subfamily.

It is found in the secreted. Functionally, protease whose physiological substrate is not yet known. The chain is Kallikrein-15 (KLK15) from Saguinus oedipus (Cotton-top tamarin).